The primary structure comprises 179 residues: ATP synthase subunit delta (179 aa).

It belongs to the ATPase delta chain family. As to quaternary structure, F-type ATPases have 2 components, F(1) - the catalytic core - and F(0) - the membrane proton channel. F(1) has five subunits: alpha(3), beta(3), gamma(1), delta(1), epsilon(1). F(0) has three main subunits: a(1), b(2) and c(10-14). The alpha and beta chains form an alternating ring which encloses part of the gamma chain. F(1) is attached to F(0) by a central stalk formed by the gamma and epsilon chains, while a peripheral stalk is formed by the delta and b chains.

It localises to the cell membrane. Functionally, f(1)F(0) ATP synthase produces ATP from ADP in the presence of a proton or sodium gradient. F-type ATPases consist of two structural domains, F(1) containing the extramembraneous catalytic core and F(0) containing the membrane proton channel, linked together by a central stalk and a peripheral stalk. During catalysis, ATP synthesis in the catalytic domain of F(1) is coupled via a rotary mechanism of the central stalk subunits to proton translocation. This protein is part of the stalk that links CF(0) to CF(1). It either transmits conformational changes from CF(0) to CF(1) or is implicated in proton conduction. The protein is ATP synthase subunit delta of Clostridium botulinum (strain Alaska E43 / Type E3).